The following is a 333-amino-acid chain: C4-dicarboxylate-binding periplasmic protein DctP (333 aa).

The first 26 residues, 1–26, serve as a signal peptide directing secretion; sequence MLTRRILGALVGATALSLALSVPALA.

This sequence belongs to the bacterial solute-binding protein 7 family. In terms of assembly, the complex comprises the extracytoplasmic solute receptor protein DctP, and the two transmembrane proteins DctQ and DctM.

Its subcellular location is the periplasm. In terms of biological role, part of the tripartite ATP-independent periplasmic (TRAP) transport system DctPQM involved in C4-dicarboxylates uptake. Binds C4-dicarboxylates such as fumarate, succinate, L-malate and D-malate. This chain is C4-dicarboxylate-binding periplasmic protein DctP, found in Rhodobacter capsulatus (Rhodopseudomonas capsulata).